The chain runs to 166 residues: Small ribosomal subunit protein uS5 (166 aa).

Residues 11–74 (LNEKLIAVNR…EKARRNMFTI (64 aa)) enclose the S5 DRBM domain.

This sequence belongs to the universal ribosomal protein uS5 family. As to quaternary structure, part of the 30S ribosomal subunit. Contacts proteins S4 and S8.

In terms of biological role, with S4 and S12 plays an important role in translational accuracy. Its function is as follows. Located at the back of the 30S subunit body where it stabilizes the conformation of the head with respect to the body. This chain is Small ribosomal subunit protein uS5, found in Aliivibrio fischeri (strain ATCC 700601 / ES114) (Vibrio fischeri).